Reading from the N-terminus, the 304-residue chain is Galactose 1-dehydrogenase (304 aa).

The protein belongs to the Gfo/Idh/MocA family. As to quaternary structure, homodimer.

The protein localises to the cytoplasm. It carries out the reaction D-galactose + NAD(+) = D-galactono-1,4-lactone + NADH + H(+). It functions in the pathway carbohydrate metabolism; galactose metabolism. In terms of biological role, catalyzes the dehydrogenation of D-galactose by either NAD(+) or NADP(+). Oxidizes following sugars in decreasing order: D-fucose &gt; D-galactose &gt; L-arabinose &gt; 2-deoxy-D-galactose &gt;&gt; 4-deoxy-D-galactose &gt; 2-deoxy-2-amino-D-galactose. This chain is Galactose 1-dehydrogenase (gal), found in Pseudomonas fluorescens.